The sequence spans 578 residues: Phosphatase DCR2 (578 aa).

ATP is bound at residue 116–123; sequence GRRWFGKS.

Its subcellular location is the cytoplasm. In terms of biological role, required for cell cycle progression. Has a role in the completion of START. The sequence is that of Phosphatase DCR2 (DCR2) from Saccharomyces cerevisiae (strain ATCC 204508 / S288c) (Baker's yeast).